The chain runs to 234 residues: Large ribosomal subunit protein uL1 (234 aa).

The protein belongs to the universal ribosomal protein uL1 family. Part of the 50S ribosomal subunit.

Its function is as follows. Binds directly to 23S rRNA. The L1 stalk is quite mobile in the ribosome, and is involved in E site tRNA release. Protein L1 is also a translational repressor protein, it controls the translation of the L11 operon by binding to its mRNA. The polypeptide is Large ribosomal subunit protein uL1 (Wolinella succinogenes (strain ATCC 29543 / DSM 1740 / CCUG 13145 / JCM 31913 / LMG 7466 / NCTC 11488 / FDC 602W) (Vibrio succinogenes)).